A 138-amino-acid polypeptide reads, in one-letter code: ATP synthase epsilon chain (138 aa).

The protein belongs to the ATPase epsilon chain family. F-type ATPases have 2 components, CF(1) - the catalytic core - and CF(0) - the membrane proton channel. CF(1) has five subunits: alpha(3), beta(3), gamma(1), delta(1), epsilon(1). CF(0) has three main subunits: a, b and c.

Its subcellular location is the cell inner membrane. Produces ATP from ADP in the presence of a proton gradient across the membrane. This chain is ATP synthase epsilon chain, found in Methylibium petroleiphilum (strain ATCC BAA-1232 / LMG 22953 / PM1).